The chain runs to 291 residues: Small ribosomal subunit biogenesis GTPase RsgA 2 (291 aa).

Residues 63–221 enclose the CP-type G domain; that stretch reads ENALVRPPVA…VADTPGFSSI (159 aa). GTP is bound by residues 112-115 and 164-172; these read SKMD and GQSGVGKST. Zn(2+)-binding residues include Cys245, Cys250, His252, and Cys258.

Belongs to the TRAFAC class YlqF/YawG GTPase family. RsgA subfamily. In terms of assembly, monomer. Associates with 30S ribosomal subunit, binds 16S rRNA. The cofactor is Zn(2+).

The protein localises to the cytoplasm. In terms of biological role, one of several proteins that assist in the late maturation steps of the functional core of the 30S ribosomal subunit. Helps release RbfA from mature subunits. May play a role in the assembly of ribosomal proteins into the subunit. Circularly permuted GTPase that catalyzes slow GTP hydrolysis, GTPase activity is stimulated by the 30S ribosomal subunit. This Listeria innocua serovar 6a (strain ATCC BAA-680 / CLIP 11262) protein is Small ribosomal subunit biogenesis GTPase RsgA 2.